A 142-amino-acid polypeptide reads, in one-letter code: ATP synthase epsilon chain, chloroplastic (142 aa).

This sequence belongs to the ATPase epsilon chain family. As to quaternary structure, F-type ATPases have 2 components, CF(1) - the catalytic core - and CF(0) - the membrane proton channel. CF(1) has five subunits: alpha(3), beta(3), gamma(1), delta(1), epsilon(1). CF(0) has three main subunits: a, b and c.

The protein resides in the plastid. Its subcellular location is the chloroplast thylakoid membrane. Functionally, produces ATP from ADP in the presence of a proton gradient across the membrane. The sequence is that of ATP synthase epsilon chain, chloroplastic from Ostreococcus tauri.